Here is a 291-residue protein sequence, read N- to C-terminus: Protease HtpX (291 aa).

The next 2 helical transmembrane spans lie at 4 to 24 and 36 to 56; these read ILLFLATNLAVLVIASITLKL and GSLLVFCAVFGFAGSLVSLFI. Zn(2+) is bound at residue histidine 142. Residue glutamate 143 is part of the active site. Histidine 146 contacts Zn(2+). 2 helical membrane-spanning segments follow: residues 150–170 and 193–213; these read GDMVTLALIQGVVNTFVMFFA and FVATIFAELVLGILASIIVMW. Glutamate 219 contacts Zn(2+).

It belongs to the peptidase M48B family. Requires Zn(2+) as cofactor.

The protein resides in the cell inner membrane. The sequence is that of Protease HtpX from Pseudomonas aeruginosa (strain LESB58).